The following is a 1104-amino-acid chain: Extended synaptotagmin-1 (1104 aa).

M1 bears the N-acetylmethionine mark. The Cytoplasmic portion of the chain corresponds to 1-38 (MERSPGEGPSPSPTDQPSAPSDPTGQPPAAHAKPDPGS). Residues 1–47 (MERSPGEGPSPSPTDQPSAPSDPTGQPPAAHAKPDPGSGGQPAGPGA) are disordered. The segment covering 15–24 (DQPSAPSDPT) has biased composition (polar residues). Positions 37-47 (GSGGQPAGPGA) are enriched in gly residues. The helical transmembrane segment at 39–59 (GGQPAGPGAAGEALAVLTSFG) threads the bilayer. The Lumenal portion of the chain corresponds to 60 to 62 (KRL). Residues 63–83 (LVLIPVYLAGAVGLSVGFVLF) form a helical membrane-spanning segment. At 84-1104 (GLALYLGWRR…LMDDKDKGSS (1021 aa)) the chain is on the cytoplasmic side. A coiled-coil region spans residues 91 to 116 (WRRVRDEKERSLRAARQLLDDEEQLT). An SMP-LTD domain is found at 135-313 (DVEKAEWLNK…LPNRLLVPLV (179 aa)). C2 domains lie at 312 to 433 (LVPD…DDWF), 460 to 580 (QVLQ…QLSS), 627 to 751 (SVDA…DEWL), and 777 to 899 (LEEV…TLNS). S324 is subject to Phosphoserine; by CDK5. Ca(2+) contacts are provided by K344, D345, D357, D404, D406, D408, D410, and D411. Disordered stretches follow at residues 617–641 (VDSENPQRGSSVDAPPRPCHTTPDS), 813–833 (RKGTKHPSPYATLTVGDTSHK), and 924–950 (SHSYSHSSSSLSEEPELSGGPPHVTSS). Position 817 is an N6-acetyllysine (K817). S820 and S941 each carry phosphoserine. A compositionally biased stretch (low complexity) spans 925–946 (HSYSHSSSSLSEEPELSGGPPH). The residue at position 948 (T948) is a Phosphothreonine. Residues S949 and S963 each carry the phosphoserine modification. Residues 971-1093 (PLGQVKLTVW…DLSQGVARWY (123 aa)) enclose the C2 5 domain. Y1009 bears the Phosphotyrosine mark. Residues 1018-1025 (KNRGTKRK) form a required for phosphatidylinositol 4,5-bisphosphate-dependent location at the cell membrane region. S1034 carries the phosphoserine modification.

The protein belongs to the extended synaptotagmin family. In terms of assembly, interacts with ESYT2 and ESYT3. Interacts with ADGRD1; inhibiting the G-protein-coupled receptor activity of ADGRD1. Interaction with ADGRD1 is abolished when cytosolic calcium increases, relieving ADGRD1 G-protein-coupled receptor activity. Interacts (phosphorylated form) with SLC2A4. Phosphorylated on Ser residues in insulin-treated adipocytes (in vitro); this promotes interaction with SLC2A4.

It is found in the endoplasmic reticulum membrane. The protein resides in the cell membrane. Its function is as follows. Binds calcium (via the C2 domains) and translocates to sites of contact between the endoplasmic reticulum and the cell membrane in response to increased cytosolic calcium levels. Helps tether the endoplasmic reticulum to the cell membrane and promotes the formation of appositions between the endoplasmic reticulum and the cell membrane. Acts as an inhibitor of ADGRD1 G-protein-coupled receptor activity in absence of cytosolic calcium. Binds glycerophospholipids in a barrel-like domain and may play a role in cellular lipid transport. This is Extended synaptotagmin-1 (ESYT1) from Pongo abelii (Sumatran orangutan).